We begin with the raw amino-acid sequence, 419 residues long: Histone acetyltransferase type B catalytic subunit (419 aa).

N-acetylalanine is present on Ala2. N6-acetyllysine is present on residues Lys9 and Lys15. The tract at residues 62–64 is interaction with histone H4 N-terminus; it reads DDE. Position 190 is a phosphoserine (Ser190). The interaction with histone H4 N-terminus stretch occupies residues 225–227; sequence YNY. Acetyl-CoA is bound by residues 241 to 243 and 248 to 254; these read MLI and QGQGHGA. Catalysis depends on Glu276, which acts as the Proton donor/acceptor. At Ser343 the chain carries Phosphoserine.

It belongs to the HAT1 family. As to quaternary structure, catalytic subunit of the type B histone acetyltransferase (HAT) complex, composed of RBBP7 and HAT1. Interacts with histones H4 and H2A. The interaction is dependent of the ability of RBBP7 to bind to the N-terminus of histones. Component of the histone H3.1 and H3.3 complexes. Post-translationally, phosphorylated by AMPK at Ser-190; phosphorylation increases HAT1 activity.

Its subcellular location is the nucleus matrix. It is found in the mitochondrion. The enzyme catalyses L-lysyl-[protein] + acetyl-CoA = N(6)-acetyl-L-lysyl-[protein] + CoA + H(+). Functionally, histone acetyltransferase that plays a role in different biological processes including cell cycle progression, glucose metabolism, histone production or DNA damage repair. Coordinates histone production and acetylation via H4 promoter binding. Acetylates histone H4 at 'Lys-5' (H4K5ac) and 'Lys-12' (H4K12ac) and, to a lesser extent, histone H2A at 'Lys-5' (H2AK5ac). Drives H4 production by chromatin binding to support chromatin replication and acetylation. Since transcription of H4 genes is tightly coupled to S-phase, plays an important role in S-phase entry and progression. Promotes homologous recombination in DNA repair by facilitating histone turnover and incorporation of acetylated H3.3 at sites of double-strand breaks. In addition, acetylates other substrates such as chromatin-related proteins. Also acetylates RSAD2 which mediates the interaction of ubiquitin ligase UBE4A with RSAD2 leading to RSAD2 ubiquitination and subsequent degradation. This is Histone acetyltransferase type B catalytic subunit (Hat1) from Rattus norvegicus (Rat).